A 1220-amino-acid chain; its full sequence is DNA-directed RNA polymerase subunit beta (1220 aa).

Belongs to the RNA polymerase beta chain family. In terms of assembly, the RNAP catalytic core consists of 2 alpha, 1 beta, 1 beta' and 1 omega subunit. When a sigma factor is associated with the core the holoenzyme is formed, which can initiate transcription.

It carries out the reaction RNA(n) + a ribonucleoside 5'-triphosphate = RNA(n+1) + diphosphate. DNA-dependent RNA polymerase catalyzes the transcription of DNA into RNA using the four ribonucleoside triphosphates as substrates. The chain is DNA-directed RNA polymerase subunit beta from Mesomycoplasma hyopneumoniae (strain J / ATCC 25934 / NCTC 10110) (Mycoplasma hyopneumoniae).